Consider the following 297-residue polypeptide: Glycine--tRNA ligase alpha subunit (297 aa).

It belongs to the class-II aminoacyl-tRNA synthetase family. Tetramer of two alpha and two beta subunits.

The protein localises to the cytoplasm. The enzyme catalyses tRNA(Gly) + glycine + ATP = glycyl-tRNA(Gly) + AMP + diphosphate. The protein is Glycine--tRNA ligase alpha subunit (glyQ) of Halalkalibacterium halodurans (strain ATCC BAA-125 / DSM 18197 / FERM 7344 / JCM 9153 / C-125) (Bacillus halodurans).